A 461-amino-acid chain; its full sequence is Glutamate-gated chloride channel alpha (461 aa).

A signal peptide spans 1–20 (MATWIVGKLIIASLILGIQA). Topologically, residues 21 to 275 (QQARTKSQDI…TTIQLKREFS (255 aa)) are extracellular. Residues arginine 98, arginine 117, and serine 182 each coordinate L-glutamate. An intrachain disulfide couples cysteine 191 to cysteine 205. Serine 211 contacts L-glutamate. Asparagine 246 carries an N-linked (GlcNAc...) asparagine glycan. Cysteine 252 and cysteine 263 are oxidised to a cystine. The chain crosses the membrane as a helical span at residues 276 to 298 (FYLLQLYIPSCMLVIVSWVSFWF). The Cytoplasmic segment spans residues 299–303 (DRTAI). The helical transmembrane segment at 304-325 (PARVTLGVTTLLTMTAQSAGIN) threads the bilayer. Topologically, residues 326–332 (SQLPPVS) are extracellular. Residues 333 to 353 (YIKAIDVWIGACMTFIFCALL) form a helical membrane-spanning segment. Topologically, residues 354-432 (EFALVNHIAN…EWNDISKRVD (79 aa)) are cytoplasmic. A helical membrane pass occupies residues 433-454 (LISRALFPVLFFVFNILYWSRF). Topologically, residues 455 to 461 (GQQNVLF) are extracellular.

It belongs to the ligand-gated ion channel (TC 1.A.9) family. Glutamate-gated chloride channel (TC 1.A.9.4) subfamily. In terms of assembly, pentamer. Homooligomer, forms functional heterooligomers with glc-2.

It localises to the postsynaptic cell membrane. The protein localises to the cell membrane. In terms of biological role, glutamate-gated chloride channel subunit; channel properties depend on the subunit composition. Glutamate binding triggers a rapidly reversible current in heteromeric channels formed by glc-1 and glc-2, while the anti-helmintic drug ivermectin and other avermectins trigger a permanently open channel configuration. Channels containing only glc-1 are activated by ivermectin, but not by glutamate alone (in vitro). The heteromeric channel formed by glc-1 and glc-2 is also activated by ibotenate, and it is blocked by picrotoxin and flufenamic acid. Plays a role in the regulation of locomotor behavior. The sequence is that of Glutamate-gated chloride channel alpha from Caenorhabditis elegans.